A 455-amino-acid chain; its full sequence is Beta-1,4-mannosyltransferase bre-3 (455 aa).

It belongs to the glycosyltransferase 2 family. Endothelial cells.

It localises to the cytoplasm. It functions in the pathway protein modification; protein glycosylation. In terms of biological role, glycosyltransferase with a proposed role in glycosphingolipid biosynthesis. Involved in susceptibility to pore-forming crystal toxins in conjunction with bre-1, bre-2, bre-4 and bre-5. Involved in resistance to the nematotoxic C.cinerea galectin Cgl2. Has a role in determining brood size. This chain is Beta-1,4-mannosyltransferase bre-3 (bre-3), found in Caenorhabditis elegans.